Reading from the N-terminus, the 502-residue chain is Lysine--tRNA ligase (502 aa).

Glu398 and Glu405 together coordinate Mg(2+).

It belongs to the class-II aminoacyl-tRNA synthetase family. Homodimer. Mg(2+) is required as a cofactor.

Its subcellular location is the cytoplasm. It carries out the reaction tRNA(Lys) + L-lysine + ATP = L-lysyl-tRNA(Lys) + AMP + diphosphate. This is Lysine--tRNA ligase from Thermotoga sp. (strain RQ2).